The chain runs to 388 residues: Putative membrane protein MJ1562 (388 aa).

6 helical membrane passes run 22–42, 219–239, 246–266, 273–293, 320–340, and 351–371; these read FLML…ATNV, SQSF…IIYF, IMPL…MGLL, ATAG…IHLM, AVMA…LAPL, and ALGI…LIVI.

It belongs to the resistance-nodulation-cell division (RND) (TC 2.A.6) family. MmpL subfamily.

The protein localises to the cell membrane. This chain is Putative membrane protein MJ1562, found in Methanocaldococcus jannaschii (strain ATCC 43067 / DSM 2661 / JAL-1 / JCM 10045 / NBRC 100440) (Methanococcus jannaschii).